A 240-amino-acid chain; its full sequence is Small ribosomal subunit protein uS2 (240 aa).

The protein belongs to the universal ribosomal protein uS2 family.

In Haemophilus influenzae (strain 86-028NP), this protein is Small ribosomal subunit protein uS2.